A 313-amino-acid polypeptide reads, in one-letter code: Protoheme IX farnesyltransferase (313 aa).

The next 9 membrane-spanning stretches (helical) occupy residues 33–53 (IALM…PVML), 59–79 (MPSW…AGSA), 107–127 (VEPA…TLMF), 129–149 (LLVN…YVFV), 162–182 (IVIG…AVTG), 188–208 (AVLL…ALAI), 212–232 (DDYA…EVVT), 252–272 (VADI…WFVA), and 292–312 (LFHM…AAAL).

It belongs to the UbiA prenyltransferase family. Protoheme IX farnesyltransferase subfamily.

It is found in the cell membrane. The catalysed reaction is heme b + (2E,6E)-farnesyl diphosphate + H2O = Fe(II)-heme o + diphosphate. Its pathway is porphyrin-containing compound metabolism; heme O biosynthesis; heme O from protoheme: step 1/1. Converts heme B (protoheme IX) to heme O by substitution of the vinyl group on carbon 2 of heme B porphyrin ring with a hydroxyethyl farnesyl side group. The protein is Protoheme IX farnesyltransferase of Parafrankia sp. (strain EAN1pec).